A 393-amino-acid chain; its full sequence is tRNA-specific 2-thiouridylase MnmA (393 aa).

ATP is bound by residues 19–26 and Leu-45; that span reads AMSGGVDS. Catalysis depends on Cys-113, which acts as the Nucleophile. Cys-113 and Cys-210 are oxidised to a cystine. Residue Gly-137 participates in ATP binding. The segment at 160–162 is interaction with tRNA; it reads RDQ. Residue Cys-210 is the Cysteine persulfide intermediate of the active site.

Belongs to the MnmA/TRMU family.

It is found in the cytoplasm. The enzyme catalyses S-sulfanyl-L-cysteinyl-[protein] + uridine(34) in tRNA + AH2 + ATP = 2-thiouridine(34) in tRNA + L-cysteinyl-[protein] + A + AMP + diphosphate + H(+). In terms of biological role, catalyzes the 2-thiolation of uridine at the wobble position (U34) of tRNA, leading to the formation of s(2)U34. This is tRNA-specific 2-thiouridylase MnmA from Bradyrhizobium diazoefficiens (strain JCM 10833 / BCRC 13528 / IAM 13628 / NBRC 14792 / USDA 110).